The primary structure comprises 434 residues: [Pyruvate dehydrogenase (acetyl-transferring)] kinase isozyme 1, mitochondrial (434 aa).

The transit peptide at 1-26 directs the protein to the mitochondrion; the sequence is MRLARLLRGGTSVRPLCAVPCASRSL. Tyr136 carries the post-translational modification Phosphotyrosine; by FGFR1. One can recognise a Histidine kinase domain in the interval 161–391; the sequence is TEYKESFGVD…DAVIYIKALS (231 aa). Tyr241 is subject to Phosphotyrosine; by FGFR1, ABL1, FLT3 and JAK2. Tyr242 bears the Phosphotyrosine; by FGFR1 mark. ATP is bound by residues 277–284, Asp316, 335–336, and 352–357; these read ELFKNAMR, ST, and GFGYGL. Thr336 is modified (phosphothreonine). The residue at position 403 (Lys403) is an N6-succinyllysine.

Belongs to the PDK/BCKDK protein kinase family. In terms of assembly, homodimer, and heterodimer with PDK2. Interacts with the pyruvate dehydrogenase complex subunit DLAT, and is part of the multimeric pyruvate dehydrogenase complex that contains multiple copies of pyruvate dehydrogenase (E1), dihydrolipoamide acetyltransferase (DLAT, E2) and lipoamide dehydrogenase (DLD, E3). Interacts with phosphoglycerate kinase PGK1; the interaction is direct, occurs under hypoxic conditions and leads to PDK1-mediated inhibition of pyruvate dehydrogenase complex activity. Phosphorylated by constitutively activated ABL1, FGFR1, FLT3 and JAK2 (in vitro), and this may also occur in cancer cells that express constitutively activated ABL1, FGFR1, FLT3 and JAK2. Phosphorylation at Tyr-241 and Tyr-242 strongly increases kinase activity, while phosphorylation at Tyr-136 has a lesser effect. Phosphorylated under hypoxic conditions at Thr-336 by phosphoglycerate kinase PGK1 which has an activating effect. Detected in pancreas islets (at protein level). Expressed predominantly in the heart.

The protein localises to the mitochondrion matrix. It carries out the reaction L-seryl-[pyruvate dehydrogenase E1 alpha subunit] + ATP = O-phospho-L-seryl-[pyruvate dehydrogenase E1 alpha subunit] + ADP + H(+). With respect to regulation, activated by binding to the pyruvate dehydrogenase complex subunit DLAT. Strongly activated by NADH plus acetyl-coenzyme A. Inhibited by dichloroacetate. In terms of biological role, kinase that plays a key role in regulation of glucose and fatty acid metabolism and homeostasis via phosphorylation of the pyruvate dehydrogenase subunits PDHA1 and PDHA2. This inhibits pyruvate dehydrogenase activity, and thereby regulates metabolite flux through the tricarboxylic acid cycle, down-regulates aerobic respiration and inhibits the formation of acetyl-coenzyme A from pyruvate. Plays an important role in cellular responses to hypoxia and is important for cell proliferation under hypoxia. In Rattus norvegicus (Rat), this protein is [Pyruvate dehydrogenase (acetyl-transferring)] kinase isozyme 1, mitochondrial (Pdk1).